The primary structure comprises 1155 residues: ATP-dependent helicase/deoxyribonuclease subunit B (1155 aa).

Residue 8–15 (GRSGSGKS) participates in ATP binding. 4 residues coordinate [4Fe-4S] cluster: Cys-793, Cys-1115, Cys-1118, and Cys-1124.

It belongs to the helicase family. AddB/RexB type 1 subfamily. Heterodimer of AddA and AddB. It depends on Mg(2+) as a cofactor. The cofactor is [4Fe-4S] cluster.

The heterodimer acts as both an ATP-dependent DNA helicase and an ATP-dependent, dual-direction single-stranded exonuclease. Recognizes the chi site generating a DNA molecule suitable for the initiation of homologous recombination. The AddB subunit has 5' -&gt; 3' nuclease activity but not helicase activity. The polypeptide is ATP-dependent helicase/deoxyribonuclease subunit B (Clostridioides difficile (strain 630) (Peptoclostridium difficile)).